The primary structure comprises 107 residues: Phycocyanobilin lyase subunit beta (107 aa).

Belongs to the CpcE/RpcE/PecE family. As to quaternary structure, cpcE and CpcF associate to form a lyase.

Functionally, required for the chromophorylation of the CpcA gene product. The polypeptide is Phycocyanobilin lyase subunit beta (cpcF) (Mastigocladus laminosus (Fischerella sp.)).